Consider the following 151-residue polypeptide: Ribosome maturation factor RimP (151 aa).

It belongs to the RimP family.

The protein resides in the cytoplasm. Functionally, required for maturation of 30S ribosomal subunits. In Vibrio vulnificus (strain CMCP6), this protein is Ribosome maturation factor RimP.